Reading from the N-terminus, the 89-residue chain is Sec translocon accessory complex subunit YrbF (89 aa).

The helical transmembrane segment at 4 to 24 (GTLGTLVPIILMFAVLYFLLI) threads the bilayer.

This sequence belongs to the YajC family. Part of the SecDF-YidC-YajC translocase complex. The SecDF-YidC-YajC translocase forms a supercomplex with SecYEG, called the holo-translocon (HTL).

Its subcellular location is the cell membrane. In terms of biological role, the SecYEG-SecDF-YajC-YidC holo-translocon (HTL) protein secretase/insertase is a supercomplex required for protein secretion, insertion of proteins into membranes, and assembly of membrane protein complexes. While the SecYEG complex is essential for assembly of a number of proteins and complexes, the SecDF-YajC-YidC subcomplex facilitates these functions. The sequence is that of Sec translocon accessory complex subunit YrbF (yrbF) from Bacillus subtilis (strain 168).